A 227-amino-acid chain; its full sequence is Uridylate kinase (227 aa).

7 to 11 (KISGK) is an ATP binding site. G44 lines the UMP pocket. ATP-binding residues include G45 and R49. UMP contacts are provided by residues D66 and 114–120 (FQPGQST). ATP contacts are provided by T140, N141, Y146, and D149.

The protein belongs to the UMP kinase family. As to quaternary structure, homohexamer.

It localises to the cytoplasm. The enzyme catalyses UMP + ATP = UDP + ADP. It participates in pyrimidine metabolism; CTP biosynthesis via de novo pathway; UDP from UMP (UMPK route): step 1/1. Its activity is regulated as follows. Unlike most bacteria, is not activated by GTP. UTP acts as a competitive inhibitor against both substrates. High concentration of UMP abolishes the inhibition of UTP at low ATP concentrations, indicating that UTP binds to the acceptor site (UMP site). Its function is as follows. Catalyzes the reversible phosphorylation of UMP to UDP, with ATP as the most efficient phosphate donor. Is also able to phosphorylate dUMP, although much less efficiently. In Saccharolobus solfataricus (strain ATCC 35092 / DSM 1617 / JCM 11322 / P2) (Sulfolobus solfataricus), this protein is Uridylate kinase (pyrH).